The chain runs to 133 residues: Transcription antitermination protein NusB (133 aa).

The protein belongs to the NusB family.

Functionally, involved in transcription antitermination. Required for transcription of ribosomal RNA (rRNA) genes. Binds specifically to the boxA antiterminator sequence of the ribosomal RNA (rrn) operons. The protein is Transcription antitermination protein NusB of Clostridium novyi (strain NT).